Reading from the N-terminus, the 701-residue chain is E3 ubiquitin-protein ligase RNF19B (701 aa).

The tract at residues 1–97 is disordered; sequence MGSEKDSESP…PAEPLSTSQA (97 aa). The segment at 1–304 is required for ubiquitin ligase activity and for protection against staurosporin-induced cell death; it reads MGSEKDSESP…VCGCEFCWLC (304 aa). A compositionally biased stretch (low complexity) spans 57 to 72; the sequence is QQLHQQQQIQQQQLLQ. The interval 103–323 is TRIAD supradomain; that stretch reads ELLECPLCLV…LSPSGCTFWG (221 aa). Residues cysteine 107, cysteine 110, cysteine 130, cysteine 133, cysteine 194, cysteine 199, cysteine 216, cysteine 221, cysteine 226, cysteine 229, histidine 234, cysteine 239, cysteine 273, and cysteine 276 each contribute to the Zn(2+) site. The segment at 107–156 adopts an RING-type 1 zinc-finger fold; that stretch reads CPLCLVRQPAEQLPELQGCSHRSCLCCLRQYLRIEITESRVQLSCPECAE. An IBR-type zinc finger spans residues 174 to 239; the sequence is EKYEEFLLRR…KQAWHPNQTC (66 aa). An RING-type 2; atypical zinc finger spans residues 273–304; sequence CPRCGAYIIKMNDGSCNHMTCAVCGCEFCWLC. The active site involves cysteine 288. The Zn(2+) site is built by cysteine 293, cysteine 296, cysteine 301, cysteine 304, histidine 312, and cysteine 319. The next 2 helical transmembrane spans lie at 340–360 and 396–416; these read LIGAPVGITLIAGIAVPAMVI and IITAPVIAAVSVGIGVPIMLA. 2 disordered regions span residues 472-495 and 658-677; these read LEGAASGLSTTSPSEGLSVAPGGL and AELTSDDCDSPHPKSCHGAP.

It belongs to the RBR family. RNF19 subfamily. As to quaternary structure, interacts with UBE2L3, UBE2L6 and UCKL1.

The protein localises to the cytoplasmic granule membrane. It localises to the endoplasmic reticulum membrane. It carries out the reaction [E2 ubiquitin-conjugating enzyme]-S-ubiquitinyl-L-cysteine + [acceptor protein]-L-lysine = [E2 ubiquitin-conjugating enzyme]-L-cysteine + [acceptor protein]-N(6)-ubiquitinyl-L-lysine.. It functions in the pathway protein modification; protein ubiquitination. Functionally, E3 ubiquitin-protein ligase which accepts ubiquitin from E2 ubiquitin-conjugating enzymes UBE2L3 and UBE2L6 in the form of a thioester and then directly transfers the ubiquitin to targeted substrates, such as UCKL1. Involved in the cytolytic activity of natural killer cells and cytotoxic T-cells. Protects against staurosporin-induced cell death. In Danio rerio (Zebrafish), this protein is E3 ubiquitin-protein ligase RNF19B (rnf19b).